Here is a 1159-residue protein sequence, read N- to C-terminus: MFLKQPGGCILLQFLGLLGLVGAVTRTYYIGIVEEYWNYVPQGKDVITGKSFSEDKLATLFLERGPNRIGGIYKKAVYRHFTDGSYSTEIPKPPWLGFLGPILRAEVGDVIVIHLMNFASRPFSLHPHGVFYDKDSEGALYPDGTSGRNKEDDMVPPGKNYTYVWPVREEYAPAPADANCLTWVYHSHIDAPKDICSGLIGPLLVCKEGVLNRYSGMRTDVDREFVIMFTLVDENQSWYLDDNIKQFCTNPNSVDKSDAVFQRSNKMHALNGFLFGNMPEPEMCVGESVSWHLFGMGNEIDIHSIYFYGNTFITRGHRADVVNLFPATFLTTEMIVENPGKWMITCQVSDHLQAGMLGQYSVGNCRGNAPHPKVQGQQRRYFIAAEKVLWDYGPQGYDKFTGFPLNTSGSDSAVYFTQADNRIGGKYWKARYTEYVDATFSRRKMPSDSEAHLGILGPVIKAEVGDILLVTFANKADKVYSILPHGVFYDKASDAAPNVDGFLKPGAHVKPGETFTYRWTVPESVSPTDEDPPCLTYLYFSAVQPIKDTSAGLVGPLLVCKKGTLNADGTQKGIDKEFYLLFTVFDENFSSYLDENIKKFTWHPFSVDKEDKEFVKSNRMHAVNGYMYGSQPGLSMCKKDRVSWHLIGMGTDTDMHGVYFQGNTIHLRGTHRDSLALFPHMATTAYMQPDHSGIFKVFCSTLPHFTRGMGQIYEISSCGNRDPSEPPYGMLRTFFIAAEEVEWDYAPNKNWEFEKQHLDAGGERHGDIFMNHTENWIGSQYRKVVYREYTNGEFVEIKARPPQEEHLQLLGPMIHAEVGDSILIIFKNKASRPYSIAAQGVEDSNNGKLLNVPVTKPGEIKTYRWNVPKRSGPGPSDPNCIPWVYFSTANFVKDTYSGLMGPLITCREGVLNEKGRRSDVDYEFALLFLVFNENESWYLDDNIKKYLNKDPRDFKHTDDFEESNKMHAINGKIFGNLPGLIMTEDSMTNWYLLGIGSEVDIHTIHYHAESFLFKIDKSYREDVYDLFPGTFQTIELFADHPGTWLLHCHVSDHIHAGMETTYTVLRNIDNRIPYSTKTPSGAGSHAVTVPSQEQPGKEELYFFGKNLRPRGAKAALVILFILGLLLLVATVVLALRLRSSRRQMAYREVQSCALPTDAL.

The signal sequence occupies residues 1 to 23 (MFLKQPGGCILLQFLGLLGLVGA). 6 consecutive Plastocyanin-like domains span residues 24–206 (VTRT…LLVC), 217–365 (MRTD…VGNC), 378–560 (QRRY…LLVC), 570–718 (TQKG…ISSC), 730–906 (MLRT…LITC), and 914–1092 (KGRR…VPSQ). Topologically, residues 24 to 1114 (VTRTYYIGIV…KNLRPRGAKA (1091 aa)) are extracellular. His126 and His128 together coordinate Cu cation. A glycan (N-linked (GlcNAc...) asparagine) is linked at Asn160. A disulfide bridge links Cys180 with Cys206. His186 and His188 together coordinate Cu cation. Asn235 carries N-linked (GlcNAc...) asparagine glycosylation. Cys284 and Cys365 are disulfide-bonded. Residues His303, Cys346, and His351 each contribute to the Cu cation site. The N-linked (GlcNAc...) asparagine glycan is linked to Asn406. Cys534 and Cys560 are oxidised to a cystine. Asn588 carries N-linked (GlcNAc...) asparagine glycosylation. Cys637 and Cys718 are oxidised to a cystine. Cu cation is bound by residues His656, Cys699, His704, and Met709. Asn771 carries an N-linked (GlcNAc...) asparagine glycan. Cys880 and Cys906 are disulfide-bonded. Residue Asn934 is glycosylated (N-linked (GlcNAc...) asparagine). 8 residues coordinate Cu cation: His1002, His1005, His1007, His1047, Cys1048, His1049, His1053, and Met1058. The chain crosses the membrane as a helical span at residues 1115 to 1135 (ALVILFILGLLLLVATVVLAL). Over 1136-1159 (RLRSSRRQMAYREVQSCALPTDAL) the chain is Cytoplasmic.

The protein belongs to the multicopper oxidase family. Cu cation is required as a cofactor.

The protein resides in the membrane. The catalysed reaction is 4 Fe(2+) + O2 + 4 H(+) = 4 Fe(3+) + 2 H2O. In terms of biological role, is a copper-binding glycoprotein with ferroxidase activity. It oxidizes Fe(2+) to Fe(3+) without releasing radical oxygen species. May be involved in the regulation of intracellular iron content. This Mus musculus (Mouse) protein is Ferroxidase HEPHL1 (Hephl1).